Consider the following 564-residue polypeptide: Proline--tRNA ligase (564 aa).

It belongs to the class-II aminoacyl-tRNA synthetase family. ProS type 1 subfamily. As to quaternary structure, homodimer.

Its subcellular location is the cytoplasm. It catalyses the reaction tRNA(Pro) + L-proline + ATP = L-prolyl-tRNA(Pro) + AMP + diphosphate. In terms of biological role, catalyzes the attachment of proline to tRNA(Pro) in a two-step reaction: proline is first activated by ATP to form Pro-AMP and then transferred to the acceptor end of tRNA(Pro). As ProRS can inadvertently accommodate and process non-cognate amino acids such as alanine and cysteine, to avoid such errors it has two additional distinct editing activities against alanine. One activity is designated as 'pretransfer' editing and involves the tRNA(Pro)-independent hydrolysis of activated Ala-AMP. The other activity is designated 'posttransfer' editing and involves deacylation of mischarged Ala-tRNA(Pro). The misacylated Cys-tRNA(Pro) is not edited by ProRS. The sequence is that of Proline--tRNA ligase from Xanthomonas oryzae pv. oryzae (strain KACC10331 / KXO85).